The chain runs to 279 residues: Probable diacylglycerol pyrophosphate phosphatase 1 (279 aa).

Topologically, residues 1-17 are lumenal; sequence MEAVGKHVKLFWNVYSD. A helical transmembrane segment spans residues 18–38; that stretch reads YAVLIAISLSYFVFDVLMLPF. Residues 39–58 lie on the Cytoplasmic side of the membrane; sequence TRQFSLEDITISHPFALHEQ. The helical transmembrane segment at 59 to 79 threads the bilayer; it reads VPTKYLGIICVFFPALVLYGF. The Lumenal segment spans residues 80-86; sequence GKLRNNS. A helical transmembrane segment spans residues 87–107; sequence LLFWKSLMGLLYSTMVCGLCV. Topologically, residues 108–163 are cytoplasmic; sequence SLLKNAVGRPRPDFLARCQPFESTPKTGLVDVLSCSVPWSDKVLQDGFRSFPSGHT. Residues 111–119 are phosphatase sequence motif I; sequence KNAVGRPRP. The tract at residues 159-162 is phosphatase sequence motif II; the sequence is PSGH. Residues 164–184 traverse the membrane as a helical segment; the sequence is SFSFAGLGFLAIFLAGQLKMF. At 185 to 187 the chain is on the lumenal side; the sequence is RNK. Residues 188–208 form a helical membrane-spanning segment; the sequence is TSSWKVVVPLVPLSIASWIGL. The Cytoplasmic portion of the chain corresponds to 209–220; it reads SRSQDYRHHKED. Positions 209–220 are phosphatase sequence motif III; the sequence is SRSQDYRHHKED. A helical membrane pass occupies residues 221–241; it reads IAVGALFGFAIAYVVYRQLFP. Residues 242–279 lie on the Lumenal side of the membrane; the sequence is PLDHHNADILYVQAELDEGYTNVHSAGNSSATNAEQMV.

The protein belongs to the PA-phosphatase related phosphoesterase family.

It is found in the vacuole membrane. Its subcellular location is the endoplasmic reticulum membrane. It catalyses the reaction a 1,2-diacyl-sn-glycerol 3-diphosphate + H2O = a 1,2-diacyl-sn-glycero-3-phosphate + phosphate + H(+). The enzyme catalyses a 1,2-diacyl-sn-glycero-3-phosphate + H2O = a 1,2-diacyl-sn-glycerol + phosphate. Its function is as follows. Catalyzes the dephosphorylation of diacylglycerol phosphate (DGPP) to phosphatidate (PA) and the subsequent dephosphorylation of PA to diacylglycerol (DAG). This is Probable diacylglycerol pyrophosphate phosphatase 1 (dpp1) from Schizosaccharomyces pombe (strain 972 / ATCC 24843) (Fission yeast).